The primary structure comprises 374 residues: PqqA peptide cyclase (374 aa).

Positions 13–230 constitute a Radical SAM core domain; the sequence is VPAPIAMLAE…EAEARLRGTL (218 aa). [4Fe-4S] cluster-binding residues include Cys-27, Cys-31, and Cys-34.

The protein belongs to the radical SAM superfamily. PqqE family. Interacts with PqqD. The interaction is necessary for activity of PqqE. The cofactor is [4Fe-4S] cluster.

The catalysed reaction is [PQQ precursor protein] + S-adenosyl-L-methionine = E-Y cross-linked-[PQQ precursor protein] + 5'-deoxyadenosine + L-methionine + H(+). It functions in the pathway cofactor biosynthesis; pyrroloquinoline quinone biosynthesis. Functionally, catalyzes the cross-linking of a glutamate residue and a tyrosine residue in the PqqA protein as part of the biosynthesis of pyrroloquinoline quinone (PQQ). The polypeptide is PqqA peptide cyclase (Ruegeria pomeroyi (strain ATCC 700808 / DSM 15171 / DSS-3) (Silicibacter pomeroyi)).